The chain runs to 485 residues: Pre-glycoprotein polyprotein GP complex (485 aa).

G2 carries N-myristoyl glycine; by host lipidation. Residues 2–17 (GQFISFMQEIPTFLQE) are Extracellular-facing. A helical membrane pass occupies residues 18-33 (ALNIALVAVSLIAIIK). Residues 34–58 (GVVNLYKSGLFQFFVFLALAGRSCT) are Cytoplasmic-facing. Position 57 (C57) interacts with Zn(2+). The Extracellular portion of the chain corresponds to 59 to 424 (EEAFKIGLHT…QGKTPLTLVD (366 aa)). Cystine bridges form between C92/C226, C135/C164, C207/C213, C271/C284, C293/C302, and C356/C377. N95 and N105 each carry an N-linked (GlcNAc...) asparagine; by host glycan. N166 and N178 each carry an N-linked (GlcNAc...) asparagine; by host glycan. Residues 250–286 (LKAFFSWSLTDSSGKDTPGGYCLEEWMLVAAKMKCFG) are fusion. Positions 287–355 (NTAVAKCNLN…KIRELMSVPY (69 aa)) are HR1. N-linked (GlcNAc...) asparagine; by host glycosylation is found at N357, N365, N382, and N387. The tract at residues 360-423 (KFWYVNHTLS…RQGKTPLTLV (64 aa)) is HR2. A helical membrane pass occupies residues 425 to 445 (ICFWSTVFFTASLFLHLVGIP). The Cytoplasmic segment spans residues 446–485 (THRHIRGEACPLPHRLNSLGGCRCGKYPNLKKPTVWRRGH). Zn(2+)-binding residues include H447, H449, C455, H459, C467, C469, and H485.

It belongs to the arenaviridae GPC protein family. Interacts with glycoprotein G2. Part of the GP complex (GP-C) together with glycoprotein G1 and glycoprotein G2. The GP-complex interacts with protein Z, which interacts with ribonucleocapsid; these interactions may induce virion budding. As to quaternary structure, homotrimer; disulfide-linked. In pre-fusion state, G1 homotrimers bind G2 homotrimers via ionic interactions. Part of the GP complex (GP-C) together with glycoprotein G2 and the stable signal peptide. Interacts with host TFRC. The GP-complex interacts with protein Z, which interacts with ribonucleocapsid; these interactions may induce virion budding. In terms of assembly, homotrimer. Interacts with the stable signal peptide. In pre-fusion state, G2 homotrimers bind G1 homotrimers via ionic interactions. Part of the GP complex (GP-C) together with glycoprotein G1 and the stable signal peptide. Acidification in the endosome triggers rearrangements, which ultimately leads to a 6 helix bundle formed by the two heptad repeat domains (HR1 and HR2) in post-fusion state. The GP-complex interacts with protein Z, which interacts with ribonucleocapsid; these interactions may induce virion budding. In terms of processing, specific enzymatic cleavages in vivo yield mature proteins. GP-C polyprotein is cleaved in the endoplasmic reticulum by the host protease MBTPS1. Only cleaved glycoprotein is incorporated into virions. The SSP remains stably associated with the GP complex following cleavage by signal peptidase and plays crucial roles in the trafficking of GP through the secretory pathway. Post-translationally, myristoylation is necessary for GP2-mediated fusion activity.

Its subcellular location is the virion membrane. The protein resides in the host endoplasmic reticulum membrane. It localises to the host Golgi apparatus membrane. It is found in the host cell membrane. Functionally, functions as a cleaved signal peptide that is retained as the third component of the GP complex (GP-C). Helps to stabilize the spike complex in its native conformation. The SSP is required for efficient glycoprotein expression, post-translational maturation cleavage of G1 and G2, glycoprotein transport to the cell surface plasma membrane, formation of infectious virus particles, and acid pH-dependent glycoprotein-mediated cell fusion. Its function is as follows. Forms the virion spikes together with glycoprotein G2. The glycoprotein spike trimers are connected to the underlying matrix. Mediates virus attachment to host TFRC. This attachment induces virion internalization predominantly through clathrin-mediated endocytosis. Forms the virion spikes together with glycoprotein G1. The glycoprotein spike trimers are connected to the underlying matrix. Class I viral fusion protein that directs fusion of viral and host endosomal membranes, leading to delivery of the nucleocapsid into the cytoplasm. Membrane fusion is mediated by irreversible conformational changes induced by acidification. In Junin mammarenavirus (JUNV), this protein is Pre-glycoprotein polyprotein GP complex.